We begin with the raw amino-acid sequence, 67 residues long: DNA-directed RNA polymerases I, II, and III subunit RPABC5 (67 aa).

Cysteine 7, cysteine 10, cysteine 44, and cysteine 45 together coordinate Zn(2+).

This sequence belongs to the archaeal Rpo10/eukaryotic RPB10 RNA polymerase subunit family. Component of the RNA polymerase I (Pol I), RNA polymerase II (Pol II) and RNA polymerase III (Pol III) complexes consisting of at least 13, 12 and 17 subunits, respectively. Pol I complex consists of a ten-subunit catalytic core composed of POLR1A/RPA1, POLR1B/RPA2, POLR1C/RPAC1, POLR1D/RPAC2, POLR1H/RPA12, POLR2E/RPABC1, POLR2F/RPABC2, POLR2H/RPABC3, POLR2K/RPABC4 and POLR2L/RPABC5; a mobile stalk subunit POLR1F/RPA43 protruding from the core and additional subunits homologous to general transcription factors POLR1E/RPA49 and POLR1G/RPA34. Part of Pol I pre-initiation complex (PIC), in which Pol I core assembles with RRN3 and promoter-bound UTBF and SL1/TIF-IB complex. Pol II complex contains a ten-subunit catalytic core composed of POLR2A/RPB1, POLR2B/RPB2, POLR2C/RPB3, POLR2I/RPB9, POLR2J/RPB11, POLR2E/RPABC1, POLR2F/RPABC2, POLR2H/RPABC3, POLR2K/RPABC4 and POLR2L/RPABC5 and a mobile stalk composed of two subunits POLR2D/RPB4 and POLR2G/RPB7. Part of Pol II(G) complex, in which Pol II core associates with an additional subunit POLR2M; unlike conventional Pol II, Pol II(G) functions as a transcriptional repressor. Part of TBP-based Pol II pre-initiation complex (PIC), in which Pol II core assembles with general transcription factors and other specific initiation factors including GTF2E1, GTF2E2, GTF2F1, GTF2F2, TCEA1, ERCC2, ERCC3, GTF2H2, GTF2H3, GTF2H4, GTF2H5, GTF2A1, GTF2A2, GTF2B and TBP; this large multi-subunit PIC complex mediates DNA unwinding and targets Pol II core to the transcription start site where the first phosphodiester bond forms. Pol III complex consists of a ten-subunit catalytic core composed of POLR3A/RPC1, POLR3B/RPC2, POLR1C/RPAC1, POLR1D/RPAC2, POLR3K/RPC10, POLR2E/RPABC1, POLR2F/RPABC2, POLR2H/RPABC3, POLR2K/RPABC4 and POLR2L/RPABC5; a mobile stalk composed of two subunits POLR3H/RPC8 and CRCP/RPC9, protruding from the core and functioning primarily in transcription initiation; and additional subunits homologous to general transcription factors of the RNA polymerase II machinery, POLR3C/RPC3-POLR3F/RPC6-POLR3G/RPC7 heterotrimer required for transcription initiation and POLR3D/RPC4-POLR3E/RPC5 heterodimer involved in both transcription initiation and termination.

The protein resides in the nucleus. Its subcellular location is the nucleolus. Its function is as follows. DNA-dependent RNA polymerase catalyzes the transcription of DNA into RNA using the four ribonucleoside triphosphates as substrates. Common component of RNA polymerases I, II and III which synthesize ribosomal RNA precursors, mRNA precursors and many functional non-coding RNAs, and a small RNAs, such as 5S rRNA and tRNAs, respectively. This Bos taurus (Bovine) protein is DNA-directed RNA polymerases I, II, and III subunit RPABC5 (POLR2L).